Reading from the N-terminus, the 428-residue chain is Probable protein phosphatase 2C 12 (428 aa).

The PPM-type phosphatase domain occupies 24–293; it reads KIDNPELIHG…DDTTCIVVDI (270 aa). Positions 69, 70, 245, and 284 each coordinate Mn(2+). A disordered region spans residues 301–331; sequence ASVPPPKKQGKGMLKSMFKRKTSDSSSNIEK.

Belongs to the PP2C family. The cofactor is Mg(2+). Requires Mn(2+) as cofactor.

It catalyses the reaction O-phospho-L-seryl-[protein] + H2O = L-seryl-[protein] + phosphate. It carries out the reaction O-phospho-L-threonyl-[protein] + H2O = L-threonyl-[protein] + phosphate. The protein is Probable protein phosphatase 2C 12 of Arabidopsis thaliana (Mouse-ear cress).